A 215-amino-acid polypeptide reads, in one-letter code: Cytochrome c biogenesis ATP-binding export protein CcmA (215 aa).

The ABC transporter domain occupies L12–P215. G44–T51 contacts ATP.

Belongs to the ABC transporter superfamily. CcmA exporter (TC 3.A.1.107) family. The complex is composed of two ATP-binding proteins (CcmA) and two transmembrane proteins (CcmB).

The protein resides in the cell inner membrane. The enzyme catalyses heme b(in) + ATP + H2O = heme b(out) + ADP + phosphate + H(+). Its function is as follows. Part of the ABC transporter complex CcmAB involved in the biogenesis of c-type cytochromes; once thought to export heme, this seems not to be the case, but its exact role is uncertain. Responsible for energy coupling to the transport system. In Xylella fastidiosa (strain Temecula1 / ATCC 700964), this protein is Cytochrome c biogenesis ATP-binding export protein CcmA.